Reading from the N-terminus, the 35-residue chain is DAPASPLADIEKHAAEFQKTISEQFNSLVNSKNTQ.

In terms of assembly, equilibrium between a soluble monomer and a bound lipoprotein form. Apolipophorin-3 associates with lipophorin during lipid loading until each particle contains 9 or 14 molecules of apolipophorin-3. Hemolymph.

It localises to the secreted. Assists in the loading of diacylglycerol, generated from triacylglycerol stores in the fat body through the action of adipokinetic hormone, into lipophorin, the hemolymph lipoprotein. It increases the lipid carrying capacity of lipophorin by covering the expanding hydrophobic surface resulting from diacylglycerol uptake. It thus plays a critical role in the transport of lipids during flight in several species of insects. Has hemagglutinating activity towards rabbit erythrocytes. In Heliothis virescens (Tobacco budworm moth), this protein is Apolipophorin-3.